We begin with the raw amino-acid sequence, 200 residues long: FMN-dependent NADH:quinone oxidoreductase (200 aa).

FMN is bound by residues Ser-10 and 95-98; that span reads MYNF.

Belongs to the azoreductase type 1 family. In terms of assembly, homodimer. Requires FMN as cofactor.

It catalyses the reaction 2 a quinone + NADH + H(+) = 2 a 1,4-benzosemiquinone + NAD(+). It carries out the reaction N,N-dimethyl-1,4-phenylenediamine + anthranilate + 2 NAD(+) = 2-(4-dimethylaminophenyl)diazenylbenzoate + 2 NADH + 2 H(+). Quinone reductase that provides resistance to thiol-specific stress caused by electrophilic quinones. In terms of biological role, also exhibits azoreductase activity. Catalyzes the reductive cleavage of the azo bond in aromatic azo compounds to the corresponding amines. The polypeptide is FMN-dependent NADH:quinone oxidoreductase (Alteromonas mediterranea (strain DSM 17117 / CIP 110805 / LMG 28347 / Deep ecotype)).